We begin with the raw amino-acid sequence, 208 residues long: Imidazoleglycerol-phosphate dehydratase (208 aa).

The interval 1–22 is disordered; sequence MTEDTETSSTGAGADDRTAAIS.

Belongs to the imidazoleglycerol-phosphate dehydratase family.

The protein localises to the cytoplasm. It carries out the reaction D-erythro-1-(imidazol-4-yl)glycerol 3-phosphate = 3-(imidazol-4-yl)-2-oxopropyl phosphate + H2O. It participates in amino-acid biosynthesis; L-histidine biosynthesis; L-histidine from 5-phospho-alpha-D-ribose 1-diphosphate: step 6/9. The sequence is that of Imidazoleglycerol-phosphate dehydratase from Haloquadratum walsbyi (strain DSM 16790 / HBSQ001).